A 161-amino-acid chain; its full sequence is Transcription initiation factor TFIID subunit 12 (161 aa).

Residues Phe-15–Asn-55 form a disordered region. Residue Lys-19 forms a Glycyl lysine isopeptide (Lys-Gly) (interchain with G-Cter in SUMO2) linkage. Over residues Pro-26–Ala-36 the composition is skewed to polar residues. Phosphothreonine is present on Thr-43. Position 51 is a phosphoserine (Ser-51). A Phosphothreonine modification is found at Thr-59. The Histone-fold domain maps to Thr-59–Met-126.

This sequence belongs to the TAF12 family. As to quaternary structure, component of the TFIID basal transcription factor complex, composed of TATA-box-binding protein TBP, and a number of TBP-associated factors (TAFs), including TAF1, TAF2, TAF3, TAF4, TAF5, TAF6, TAF7, TAF8, TAF9, TAF10, TAF11, TAF12 and TAF13. Component of the TATA-binding protein-free TAF complex (TFTC), the PCAF histone acetylase complex and the STAGA transcription coactivator-HAT complex. Component of the PCAF complex, at least composed of TADA2L/ADA2, TADA3L/ADA3, TAF5L/PAF65-beta, SUPT3H, TAF6L, TAF9, TAF10, TAF12 and TRRAP. Component of the STAGA transcription coactivator-HAT complex, at least composed of SUPT3H, GCN5L2, TAF5L, TAF6L, STAF65-gamma/SUPT7L, TADA3L, TAD1L, TAF10, TAF12, TRRAP and TAF9. Interacts with ATF7 (via the transactivation domain); the interaction is prevented by sumoylation of ATF7. In terms of assembly, interacts with TBP; the interaction is direct. Interacts with TAF10; the interaction is direct. Interacts with ATF7, promoting transactivation by ATF7. Does not promote the transactivation of ATF7. As to expression, ubiquitous.

Its subcellular location is the nucleus. Functionally, the TFIID basal transcription factor complex plays a major role in the initiation of RNA polymerase II (Pol II)-dependent transcription. TFIID recognizes and binds promoters with or without a TATA box via its subunit TBP, a TATA-box-binding protein, and promotes assembly of the pre-initiation complex (PIC). The TFIID complex consists of TBP and TBP-associated factors (TAFs), including TAF1, TAF2, TAF3, TAF4, TAF5, TAF6, TAF7, TAF8, TAF9, TAF10, TAF11, TAF12 and TAF13. Component of the TATA-binding protein-free TAF complex (TFTC), the PCAF histone acetylase complex and the STAGA transcription coactivator-HAT complex. The sequence is that of Transcription initiation factor TFIID subunit 12 from Homo sapiens (Human).